The primary structure comprises 590 residues: Ankyrin repeat-containing protein ITN1 (590 aa).

The tract at residues 25–44 (ENQNPMIDPSPTPSPSATAT) is disordered. ANK repeat units lie at residues 73–102 (HNDT…SQME), 128–157 (LGET…RESI), 163–192 (SGYD…TLSQ), 197–226 (SNAT…NLLE), 231–260 (NNKN…QLAR), 265–294 (KGQT…AIVM), and 299–329 (SCNT…NANT). The next 4 membrane-spanning stretches (helical) occupy residues 422-442 (VTVV…TVPG), 460-480 (IFFI…VVQI), 500-520 (LMWL…YIVV), and 531-551 (VTVV…YYVV).

In terms of assembly, interacts with REM19/RTV1. As to expression, expressed in roots, shoots, leaf vasculature and stems.

The protein localises to the cell membrane. Involved in salt stress tolerance. May act through abscisic acid (ABA) signaling pathways and promote reactive oxygen species (ROS) production. The chain is Ankyrin repeat-containing protein ITN1 from Arabidopsis thaliana (Mouse-ear cress).